The primary structure comprises 126 residues: MSSQQQKQPCTLPPQLQQHQVKQPCQPPPQEPCVPKTKEPCQPKVPEPCQPKVPEPCQPKVPEPCQPKVPQPCQPKVPEPCQPKVPEPCQPKVPEPCQPKVPEPCQSKVPQPCQPKVPEPCQTKQK.

S2 bears the N-acetylserine mark. 13 consecutive repeat copies span residues S3 to P14, Q18 to P29, E31 to K38, E39 to P46, E47 to P54, E55 to P62, E63 to P70, Q71 to P78, E79 to P86, E87 to P94, E95 to P102, E103 to P110, and Q111 to P118. The segment at S3–P29 is 2 X 12 AA approximate repeats. Residues Q20–P43 are disordered. Residues E31–Q122 are 11 X 8 AA approximate tandem repeats. The segment at P104–K126 is disordered.

It belongs to the cornifin (SPRR) family. In terms of tissue distribution, suprabasal layers of squamous-differentiated tissues such as epidermis, esophagus, tongue and trachea.

It is found in the cytoplasm. Functionally, cross-linked envelope protein of keratinocytes. It is a keratinocyte protein that first appears in the cell cytosol, but ultimately becomes cross-linked to membrane proteins by transglutaminase. All that results in the formation of an insoluble envelope beneath the plasma membrane. This is Cornifin alpha from Oryctolagus cuniculus (Rabbit).